The following is a 316-amino-acid chain: Secondary metabolism regulator laeA (316 aa).

The protein belongs to the methyltransferase superfamily. LaeA methyltransferase family. In terms of assembly, component of the heterotrimeric velvet complex composed of laeA, veA and velB; VeA acting as a bridging protein between laeA and velB.

The protein resides in the nucleus. The enzyme catalyses L-methionyl-[protein] + S-adenosyl-L-methionine = S-methyl-L-methionyl-[protein] + S-adenosyl-L-homocysteine. Its function is as follows. Methyltransferase that performs automethylation. No other methyl-accepting substrate has been identified yet. Component of the velvet transcription factor complex that acts as a global regulator for secondary metabolite gene expression. Controls the biosynthetic gene cluster for beauvericin, a depsipeptide mycotoxin that functions as a virulence determinant. The velvet complex also regulates chromatin structure and transcription of siderophore biosynthetic genes and is required for infection of tomato plants. The velvet complex also governs expression of nitrate metabolism genes. This chain is Secondary metabolism regulator laeA, found in Fusarium oxysporum f. sp. lycopersici (strain 4287 / CBS 123668 / FGSC 9935 / NRRL 34936) (Fusarium vascular wilt of tomato).